The chain runs to 232 residues: Ribonuclease HII (232 aa).

In terms of domain architecture, RNase H type-2 spans 26–218 (RILCGVDEAG…VRRALEGMSA (193 aa)). A divalent metal cation is bound by residues Asp32, Glu33, and Asp127.

The protein belongs to the RNase HII family. It depends on Mn(2+) as a cofactor. Mg(2+) serves as cofactor.

It is found in the cytoplasm. It catalyses the reaction Endonucleolytic cleavage to 5'-phosphomonoester.. In terms of biological role, endonuclease that specifically degrades the RNA of RNA-DNA hybrids. The chain is Ribonuclease HII from Ralstonia pickettii (strain 12J).